Reading from the N-terminus, the 143-residue chain is Glutaredoxin-2 (143 aa).

The transit peptide at 1-30 (METNFSFDSNLIVIIIITLFATRIIAKRFL) directs the protein to the mitochondrion. Serine 37 carries the post-translational modification Phosphoserine. The Glutaredoxin domain maps to 41–143 (VAHVKDLIGQ…LAEILKPVFQ (103 aa)). 58–63 (KTYCPY) lines the glutathione pocket. Cysteine 61 bears the S-glutathionyl cysteine; alternate mark. The cysteines at positions 61 and 64 are disulfide-linked. Serine 91 carries the post-translational modification Phosphoserine. Glutathione contacts are provided by residues valine 109 and 122–123 (NS).

This sequence belongs to the glutaredoxin family.

It localises to the cytoplasm. It is found in the mitochondrion. It carries out the reaction 2 glutathione + H2O2 = glutathione disulfide + 2 H2O. The enzyme catalyses 1-chloro-2,4-dinitrobenzene + glutathione = 2,4-dinitrophenyl-S-glutathione + chloride + H(+). It catalyses the reaction RX + glutathione = an S-substituted glutathione + a halide anion + H(+). In terms of biological role, component of the glutathione system which performs several activities such as glutathione-dependent oxidoreductase, glutathione peroxidase and glutathione S-transferase (GST) activity. The disulfide bond functions as an electron carrier in the glutathione-dependent synthesis of deoxyribonucleotides by the enzyme ribonucleotide reductase. In addition, it is also involved in reducing cytosolic protein- and non-protein-disulfides in a coupled system with glutathione reductase. Required for resistance to reactive oxygen species (ROS) by directly reducing hydroperoxides and for the detoxification of ROS-mediated damage. GRX2 is more active as an oxidoreductase than GRX1. Responsible for the S-glutathionylation of DHBP synthase. The protein is Glutaredoxin-2 (GRX2) of Saccharomyces cerevisiae (strain ATCC 204508 / S288c) (Baker's yeast).